The chain runs to 416 residues: MEKLYVEGNKILNGHVIISGSKNAALPILFMTILTEGKIKIGNIPNLTDINIALKLLVYLGVKITGNETLCIDASSINIFCPPYNLINKIRASIWILGPLLARFGKAKIFLPGGCKIGSRPIDLHLNGLTQLGATINLKNNCIDAYVKGRLQGKYILMEKISVGATITIMSAATLAKGSTIIDNAACEPEIVDIAKFLNTLGADIIGAGSNKICIKGVLKLTGGTHQVIPDRIETGTFLVAAAASQGHITCHKTEPKHLTNVLMKLTEAGAKIKTGKDWIKLDMRGKRPKSLNICTAPYPGFPTDMQAQFALLNSISKGIGTITETIFENRFIYTSELIRMGAKIKIKNNTIICCGIPKLISSNVFSSDLRASATLILAGCIAAGITIVNHTYHLVRGYESFPKKLNKIGANIKII.

Phosphoenolpyruvate is bound at residue 22-23 (KN). A UDP-N-acetyl-alpha-D-glucosamine-binding site is contributed by R91. C115 serves as the catalytic Proton donor. C115 carries the 2-(S-cysteinyl)pyruvic acid O-phosphothioketal modification. Residues 120-124 (RPIDL), D305, and I327 each bind UDP-N-acetyl-alpha-D-glucosamine.

This sequence belongs to the EPSP synthase family. MurA subfamily.

It localises to the cytoplasm. It carries out the reaction phosphoenolpyruvate + UDP-N-acetyl-alpha-D-glucosamine = UDP-N-acetyl-3-O-(1-carboxyvinyl)-alpha-D-glucosamine + phosphate. It functions in the pathway cell wall biogenesis; peptidoglycan biosynthesis. Cell wall formation. Adds enolpyruvyl to UDP-N-acetylglucosamine. The chain is UDP-N-acetylglucosamine 1-carboxyvinyltransferase from Buchnera aphidicola subsp. Acyrthosiphon pisum (strain Tuc7).